The chain runs to 191 residues: Xanthine phosphoribosyltransferase (191 aa).

Residues Leu-20 and Asn-27 each contribute to the xanthine site. Residue 128-132 (ANGQA) participates in 5-phospho-alpha-D-ribose 1-diphosphate binding. Xanthine is bound at residue Lys-156.

This sequence belongs to the purine/pyrimidine phosphoribosyltransferase family. Xpt subfamily. As to quaternary structure, homodimer.

The protein localises to the cytoplasm. It catalyses the reaction XMP + diphosphate = xanthine + 5-phospho-alpha-D-ribose 1-diphosphate. Its pathway is purine metabolism; XMP biosynthesis via salvage pathway; XMP from xanthine: step 1/1. Its function is as follows. Converts the preformed base xanthine, a product of nucleic acid breakdown, to xanthosine 5'-monophosphate (XMP), so it can be reused for RNA or DNA synthesis. In Acinetobacter baumannii (strain AB307-0294), this protein is Xanthine phosphoribosyltransferase.